The following is a 300-amino-acid chain: 4-hydroxy-tetrahydrodipicolinate synthase (300 aa).

T55 lines the pyruvate pocket. Y143 serves as the catalytic Proton donor/acceptor. K171 (schiff-base intermediate with substrate) is an active-site residue. I211 is a binding site for pyruvate.

This sequence belongs to the DapA family. As to quaternary structure, homotetramer; dimer of dimers.

It is found in the cytoplasm. The catalysed reaction is L-aspartate 4-semialdehyde + pyruvate = (2S,4S)-4-hydroxy-2,3,4,5-tetrahydrodipicolinate + H2O + H(+). It functions in the pathway amino-acid biosynthesis; L-lysine biosynthesis via DAP pathway; (S)-tetrahydrodipicolinate from L-aspartate: step 3/4. Functionally, catalyzes the condensation of (S)-aspartate-beta-semialdehyde [(S)-ASA] and pyruvate to 4-hydroxy-tetrahydrodipicolinate (HTPA). This chain is 4-hydroxy-tetrahydrodipicolinate synthase, found in Mycobacterium bovis (strain ATCC BAA-935 / AF2122/97).